Reading from the N-terminus, the 312-residue chain is DNA-directed RNA polymerase subunit alpha (312 aa).

The interval 1-226 is alpha N-terminal domain (alpha-NTD); it reads MIEFEKPNIT…EHLNLFTNLT (226 aa). Residues 243–312 form an alpha C-terminal domain (alpha-CTD) region; that stretch reads DDRILERTIE…DLGLGLKNDK (70 aa).

It belongs to the RNA polymerase alpha chain family. Homodimer. The RNAP catalytic core consists of 2 alpha, 1 beta, 1 beta' and 1 omega subunit. When a sigma factor is associated with the core the holoenzyme is formed, which can initiate transcription.

The enzyme catalyses RNA(n) + a ribonucleoside 5'-triphosphate = RNA(n+1) + diphosphate. Functionally, DNA-dependent RNA polymerase catalyzes the transcription of DNA into RNA using the four ribonucleoside triphosphates as substrates. In Streptococcus sanguinis (strain SK36), this protein is DNA-directed RNA polymerase subunit alpha.